The sequence spans 597 residues: Probable potassium transport system protein Kup 1 (597 aa).

The next 10 membrane-spanning stretches (helical) occupy residues 23 to 43, 72 to 92, 98 to 118, 143 to 163, 174 to 194, 226 to 246, 273 to 293, 303 to 323, 329 to 349, and 353 to 373; these read GAWL…DSVL, LTMM…SRGT, VFGS…VVAI, ATGL…EALY, IYFT…GQGA, AVVL…TGAF, LYIP…LLLF, YGLA…IYLW, FGAV…FAAS, and FLHG…IMYT.

Belongs to the HAK/KUP transporter (TC 2.A.72) family.

The protein resides in the cell membrane. It catalyses the reaction K(+)(in) + H(+)(in) = K(+)(out) + H(+)(out). Functionally, transport of potassium into the cell. Likely operates as a K(+):H(+) symporter. The chain is Probable potassium transport system protein Kup 1 (kup1) from Bifidobacterium longum (strain NCC 2705).